Here is a 616-residue protein sequence, read N- to C-terminus: Chaperone protein HscA (616 aa).

This sequence belongs to the heat shock protein 70 family.

In terms of biological role, chaperone involved in the maturation of iron-sulfur cluster-containing proteins. Has a low intrinsic ATPase activity which is markedly stimulated by HscB. Involved in the maturation of IscU. The sequence is that of Chaperone protein HscA from Shigella boydii serotype 18 (strain CDC 3083-94 / BS512).